The primary structure comprises 37 residues: Large ribosomal subunit protein bL36 (37 aa).

It belongs to the bacterial ribosomal protein bL36 family.

This is Large ribosomal subunit protein bL36 from Nitratidesulfovibrio vulgaris (strain DSM 19637 / Miyazaki F) (Desulfovibrio vulgaris).